Reading from the N-terminus, the 71-residue chain is UPF0346 protein BCB4264_A2283 (71 aa).

The protein belongs to the UPF0346 family.

The sequence is that of UPF0346 protein BCB4264_A2283 from Bacillus cereus (strain B4264).